Consider the following 902-residue polypeptide: HTH-type transcriptional regulator MalT (902 aa).

ATP is bound at residue 39-46; sequence SPAGYGKT. Residues 830-895 form the HTH luxR-type domain; that stretch reads ELIRTSPLTQ…DAVQHAQQLL (66 aa). A DNA-binding region (H-T-H motif) is located at residues 854-873; sequence NEQIAGELAVAATTIKTHIR.

This sequence belongs to the MalT family. As to quaternary structure, monomer in solution. Oligomerizes to an active state in the presence of the positive effectors ATP and maltotriose.

Its activity is regulated as follows. Activated by ATP and maltotriose, which are both required for DNA binding. In terms of biological role, positively regulates the transcription of the maltose regulon whose gene products are responsible for uptake and catabolism of malto-oligosaccharides. Specifically binds to the promoter region of its target genes, recognizing a short DNA motif called the MalT box. This is HTH-type transcriptional regulator MalT from Salmonella dublin (strain CT_02021853).